The chain runs to 321 residues: Small ribosomal subunit biogenesis GTPase RsgA (321 aa).

Residues 89–248 (QSWINRPPVA…VADTPGFNRP (160 aa)) enclose the CP-type G domain. GTP is bound by residues 138 to 141 (TKRD) and 190 to 198 (GPSGVGKTS). Residues Cys-273, Cys-278, His-280, and Cys-286 each coordinate Zn(2+).

This sequence belongs to the TRAFAC class YlqF/YawG GTPase family. RsgA subfamily. In terms of assembly, monomer. Associates with 30S ribosomal subunit, binds 16S rRNA. It depends on Zn(2+) as a cofactor.

Its subcellular location is the cytoplasm. One of several proteins that assist in the late maturation steps of the functional core of the 30S ribosomal subunit. Helps release RbfA from mature subunits. May play a role in the assembly of ribosomal proteins into the subunit. Circularly permuted GTPase that catalyzes slow GTP hydrolysis, GTPase activity is stimulated by the 30S ribosomal subunit. The sequence is that of Small ribosomal subunit biogenesis GTPase RsgA from Prochlorococcus marinus (strain MIT 9313).